An 84-amino-acid chain; its full sequence is DNA-directed RNA polymerase subunit Rpo5 (84 aa).

It belongs to the archaeal Rpo5/eukaryotic RPB5 RNA polymerase subunit family. As to quaternary structure, part of the 13-subunit RNA polymerase.

The protein resides in the cytoplasm. It carries out the reaction RNA(n) + a ribonucleoside 5'-triphosphate = RNA(n+1) + diphosphate. Functionally, DNA-dependent RNA polymerase (RNAP) catalyzes the transcription of DNA into RNA using the four ribonucleoside triphosphates as substrates. In terms of biological role, reconstitution experiments show this subunit is required for basic activity. The protein is DNA-directed RNA polymerase subunit Rpo5 of Sulfolobus acidocaldarius (strain ATCC 33909 / DSM 639 / JCM 8929 / NBRC 15157 / NCIMB 11770).